A 157-amino-acid polypeptide reads, in one-letter code: Endoribonuclease YbeY (157 aa).

Zn(2+) is bound by residues H121, H125, and D131.

Belongs to the endoribonuclease YbeY family. Requires Zn(2+) as cofactor.

The protein localises to the cytoplasm. Functionally, single strand-specific metallo-endoribonuclease involved in late-stage 70S ribosome quality control and in maturation of the 3' terminus of the 16S rRNA. This chain is Endoribonuclease YbeY, found in Salinibacter ruber (strain DSM 13855 / M31).